We begin with the raw amino-acid sequence, 251 residues long: Large ribosomal subunit protein uL16m (251 aa).

A mitochondrion-targeting transit peptide spans 1-29 (MWRLLSGARAPVLRATLSDSWAAPPARAG).

The protein belongs to the universal ribosomal protein uL16 family. Component of the mitochondrial ribosome large subunit (39S) which comprises a 16S rRNA and about 50 distinct proteins.

It is found in the mitochondrion. This Bos taurus (Bovine) protein is Large ribosomal subunit protein uL16m (MRPL16).